The primary structure comprises 732 residues: Elongation factor 2 (732 aa).

In terms of domain architecture, tr-type G spans 19-260 (ERIRNMGIAA…MVVKHLPNPL (242 aa)). Residues 28-35 (AHIDHGKT), 94-98 (DTPGH), and 148-151 (NKVD) each bind GTP. A Diphthamide modification is found at His597.

The protein belongs to the TRAFAC class translation factor GTPase superfamily. Classic translation factor GTPase family. EF-G/EF-2 subfamily.

It localises to the cytoplasm. Its function is as follows. Catalyzes the GTP-dependent ribosomal translocation step during translation elongation. During this step, the ribosome changes from the pre-translocational (PRE) to the post-translocational (POST) state as the newly formed A-site-bound peptidyl-tRNA and P-site-bound deacylated tRNA move to the P and E sites, respectively. Catalyzes the coordinated movement of the two tRNA molecules, the mRNA and conformational changes in the ribosome. This chain is Elongation factor 2, found in Thermococcus kodakarensis (strain ATCC BAA-918 / JCM 12380 / KOD1) (Pyrococcus kodakaraensis (strain KOD1)).